The following is a 140-amino-acid chain: uncharacterized protein (140 aa).

A coiled-coil region spans residues 27 to 65 (LLGEVSELELQKICFNRSLRNEINQLEEQNDISFVRVER).

This is an uncharacterized protein from Pasteurella multocida (strain Pm70).